The primary structure comprises 416 residues: S-adenosylmethionine synthase (416 aa).

His-14 contacts ATP. Asp-16 serves as a coordination point for Mg(2+). Position 42 (Glu-42) interacts with K(+). 2 residues coordinate L-methionine: Glu-55 and Gln-98. Residues 98–108 (QSADINQGVDR) are flexible loop. ATP-binding positions include 164-166 (DAK), 240-241 (KF), Asp-249, 255-256 (RK), Ala-272, and Lys-276. Asp-249 contributes to the L-methionine binding site. An L-methionine-binding site is contributed by Lys-280.

The protein belongs to the AdoMet synthase family. As to quaternary structure, homotetramer; dimer of dimers. It depends on Mg(2+) as a cofactor. Requires K(+) as cofactor.

The protein resides in the cytoplasm. It carries out the reaction L-methionine + ATP + H2O = S-adenosyl-L-methionine + phosphate + diphosphate. The protein operates within amino-acid biosynthesis; S-adenosyl-L-methionine biosynthesis; S-adenosyl-L-methionine from L-methionine: step 1/1. Catalyzes the formation of S-adenosylmethionine (AdoMet) from methionine and ATP. The overall synthetic reaction is composed of two sequential steps, AdoMet formation and the subsequent tripolyphosphate hydrolysis which occurs prior to release of AdoMet from the enzyme. This Flavobacterium johnsoniae (strain ATCC 17061 / DSM 2064 / JCM 8514 / BCRC 14874 / CCUG 350202 / NBRC 14942 / NCIMB 11054 / UW101) (Cytophaga johnsonae) protein is S-adenosylmethionine synthase.